The following is a 102-amino-acid chain: Small ribosomal subunit protein uS10 (102 aa).

This sequence belongs to the universal ribosomal protein uS10 family. Part of the 30S ribosomal subunit.

Its function is as follows. Involved in the binding of tRNA to the ribosomes. This chain is Small ribosomal subunit protein uS10, found in Streptococcus pyogenes serotype M12 (strain MGAS2096).